The following is a 372-amino-acid chain: ATP phosphoribosyltransferase regulatory subunit (372 aa).

This sequence belongs to the class-II aminoacyl-tRNA synthetase family. HisZ subfamily. In terms of assembly, heteromultimer composed of HisG and HisZ subunits.

It localises to the cytoplasm. Its pathway is amino-acid biosynthesis; L-histidine biosynthesis; L-histidine from 5-phospho-alpha-D-ribose 1-diphosphate: step 1/9. In terms of biological role, required for the first step of histidine biosynthesis. May allow the feedback regulation of ATP phosphoribosyltransferase activity by histidine. The protein is ATP phosphoribosyltransferase regulatory subunit of Allorhizobium ampelinum (strain ATCC BAA-846 / DSM 112012 / S4) (Agrobacterium vitis (strain S4)).